A 198-amino-acid polypeptide reads, in one-letter code: dTTP/UTP pyrophosphatase (198 aa).

The active-site Proton acceptor is D75.

It belongs to the Maf family. YhdE subfamily. It depends on a divalent metal cation as a cofactor.

It is found in the cytoplasm. It carries out the reaction dTTP + H2O = dTMP + diphosphate + H(+). The catalysed reaction is UTP + H2O = UMP + diphosphate + H(+). In terms of biological role, nucleoside triphosphate pyrophosphatase that hydrolyzes dTTP and UTP. May have a dual role in cell division arrest and in preventing the incorporation of modified nucleotides into cellular nucleic acids. The polypeptide is dTTP/UTP pyrophosphatase (Wolbachia sp. subsp. Brugia malayi (strain TRS)).